Consider the following 351-residue polypeptide: UPF0764 protein C16orf89 homolog (351 aa).

The first 25 residues, 1-25 (MKSLKMLYPLFMLLVLSSKIDLSNQ), serve as a signal peptide directing secretion.

The protein belongs to the UPF0764 family. Homodimer.

It is found in the secreted. The chain is UPF0764 protein C16orf89 homolog from Danio rerio (Zebrafish).